We begin with the raw amino-acid sequence, 85 residues long: 4-hydroxyphenylacetate decarboxylase small subunit (85 aa).

Histidine 4, cysteine 7, cysteine 20, cysteine 34, cysteine 43, cysteine 46, cysteine 60, and cysteine 78 together coordinate [4Fe-4S] cluster.

The protein belongs to the HPA decarboxylase small subunit family. Heterooctamer consisting of 4 large (HpdB) subunits and 4 small (HpdC) subunits, arranged as a tetramer of heterodimers. [4Fe-4S] cluster serves as cofactor.

It catalyses the reaction 4-hydroxyphenylacetate + H(+) = 4-methylphenol + CO2. The enzyme catalyses 3,4-dihydroxyphenylacetate + H(+) = 4-methylcatechol + CO2. In terms of biological role, component of the HPA decarboxylase that decarboxylates phenylacetates with a hydroxyl group in the p-position. Active toward 4-hydroxyphenylacetate and 3,4-dihydroxyphenylacetate, forming 4-methylphenol and 4-methylcatechol, respectively. Is likely involved in the catabolism of aromatic amino acids such as tyrosine fermentation. 4-methylphenol (p-cresol) formation provides metabolic toxicity, which allows an active suppression of other microbes and may provide growth advantages for the producers in highly competitive environments. The small subunit is essential for enzymatic activity of HPA decarboxylase, and also seems to be involved in the regulation of the enzyme oligomeric state and catalytic activity. The chain is 4-hydroxyphenylacetate decarboxylase small subunit from Clostridioides difficile (strain 630) (Peptoclostridium difficile).